Consider the following 76-residue polypeptide: MPSVRSVTCCCLLWMMLSVQLVTPGSPGTAQLSGHRTARSPGSTICKMACRTGNGHKYPFCNCRGKRDVVSSSMAV.

The first 24 residues, 1–24, serve as a signal peptide directing secretion; the sequence is MPSVRSVTCCCLLWMMLSVQLVTP. The propeptide occupies 25–39; the sequence is GSPGTAQLSGHRTAR. 2 disulfide bridges follow: C46/C61 and C50/C63. R64 bears the Arginine amide mark. A propeptide spanning residues 65 to 76 is cleaved from the precursor; sequence GKRDVVSSSMAV.

The protein belongs to the conotoxin J superfamily. In terms of tissue distribution, expressed by the venom duct.

The protein resides in the secreted. Its function is as follows. Highly inhibits both nicotinic acetylcholine receptors (neuronal (alpha-3/beta-4) and muscular (alpha-1/beta-1/epsilon/delta) subtypes) and the voltage-gated potassium channel Kv1.6/KCNA6 subtype. This chain is Alpha/kappa-conotoxin-like fe14.1, found in Conus ferrugineus (Cone snail).